The chain runs to 352 residues: Quinolinate synthase (352 aa).

Positions 48 and 69 each coordinate iminosuccinate. A [4Fe-4S] cluster-binding site is contributed by C114. Iminosuccinate contacts are provided by residues 140–142 (YAN) and S157. C201 lines the [4Fe-4S] cluster pocket. Residues 227–229 (HPE) and T244 contribute to the iminosuccinate site. C298 is a binding site for [4Fe-4S] cluster.

This sequence belongs to the quinolinate synthase family. Type 1 subfamily. [4Fe-4S] cluster serves as cofactor.

Its subcellular location is the cytoplasm. The catalysed reaction is iminosuccinate + dihydroxyacetone phosphate = quinolinate + phosphate + 2 H2O + H(+). It functions in the pathway cofactor biosynthesis; NAD(+) biosynthesis; quinolinate from iminoaspartate: step 1/1. Its function is as follows. Catalyzes the condensation of iminoaspartate with dihydroxyacetone phosphate to form quinolinate. This is Quinolinate synthase from Pseudomonas syringae pv. syringae (strain B728a).